Reading from the N-terminus, the 356-residue chain is Branched-chain-amino-acid aminotransferase 6 (356 aa).

N6-(pyridoxal phosphate)lysine is present on Lys-199.

The protein belongs to the class-IV pyridoxal-phosphate-dependent aminotransferase family. Pyridoxal 5'-phosphate is required as a cofactor.

It localises to the cytoplasm. The enzyme catalyses L-leucine + 2-oxoglutarate = 4-methyl-2-oxopentanoate + L-glutamate. It carries out the reaction L-isoleucine + 2-oxoglutarate = (S)-3-methyl-2-oxopentanoate + L-glutamate. The catalysed reaction is L-valine + 2-oxoglutarate = 3-methyl-2-oxobutanoate + L-glutamate. It functions in the pathway amino-acid biosynthesis; L-isoleucine biosynthesis; L-isoleucine from 2-oxobutanoate: step 4/4. It participates in amino-acid biosynthesis; L-leucine biosynthesis; L-leucine from 3-methyl-2-oxobutanoate: step 4/4. The protein operates within amino-acid biosynthesis; L-valine biosynthesis; L-valine from pyruvate: step 4/4. In terms of biological role, converts 2-oxo acids to branched-chain amino acids. Acts on leucine, isoleucine and valine. The sequence is that of Branched-chain-amino-acid aminotransferase 6 (BCAT6) from Arabidopsis thaliana (Mouse-ear cress).